Consider the following 417-residue polypeptide: Voltage-gated ClC-type chloride channel ClcB (417 aa).

The next 10 helical transmembrane spans lie at 5–25 (LLIATLIGILAALAVAAFRHA), 54–74 (LITPALGGLAAGLLLWGWQKM), 146–166 (LWIASGAAAGMAGAYHAPLAG), 168–188 (LFIAEILFGTLMLASLGPVVV), 222–242 (VMIVSTGLVAGLCGPLLMWLM), 258–278 (WQLALGGLIVGLLSLLTPTVW), 288–308 (FLLSPPLFSLIGGIFACKILA), 316–336 (GAPGGVFTPTLFVGLSIGMFL), 349–371 (EIAILLGLAGMATLLAATTHAPI), and 380–400 (MTGEYQLLPGLLIACVVASVL).

This sequence belongs to the chloride channel (TC 2.A.49) family. ClcB subfamily.

It localises to the cell inner membrane. Probably acts as an electrical shunt for an outwardly-directed proton pump that is linked to amino acid decarboxylation, as part of the extreme acid resistance (XAR) response. The sequence is that of Voltage-gated ClC-type chloride channel ClcB from Salmonella dublin (strain CT_02021853).